The following is a 239-amino-acid chain: Phospholipase A2 (239 aa).

Positions 1–19 are cleaved as a signal peptide; the sequence is MSLIIVLVISVLSADAVLS. Residues 20–105 constitute a propeptide that is removed on maturation; sequence MDNELYLNLE…GRCLSVGESE (86 aa). Residues tryptophan 113, glycine 115, and glycine 117 each coordinate Ca(2+). 5 disulfides stabilise this stretch: cysteine 114/cysteine 136, cysteine 135/cysteine 174, cysteine 142/cysteine 167, cysteine 165/cysteine 202, and cysteine 207/cysteine 217. Residue histidine 139 is part of the active site. Ca(2+) is bound at residue aspartate 140. A propeptide spanning residues 211–213 is cleaved from the precursor; it reads RSP.

The protein belongs to the phospholipase A2 family. Group III subfamily. In terms of assembly, heterodimer composed of a small subunit and a large subunit; disulfid-linked. Ca(2+) serves as cofactor. As to expression, expressed by the venom gland.

It localises to the secreted. The catalysed reaction is a 1,2-diacyl-sn-glycero-3-phosphocholine + H2O = a 1-acyl-sn-glycero-3-phosphocholine + a fatty acid + H(+). In terms of biological role, toxic phospholipase A2, which may catalyze the calcium-dependent hydrolysis of the 2-acyl groups in 3-sn-phosphoglycerides. Inhibits both skeletal (RYR1) and cardiac (RYR2) ryanodine receptors (calcium release channels). Probably blocks ryanodine receptors by generating a lipid product. The protein is Phospholipase A2 of Hoffmannihadrurus gertschi (Scorpion).